Consider the following 466-residue polypeptide: Uronate isomerase (466 aa).

The protein belongs to the metallo-dependent hydrolases superfamily. Uronate isomerase family.

It catalyses the reaction D-glucuronate = D-fructuronate. It carries out the reaction aldehydo-D-galacturonate = keto-D-tagaturonate. It functions in the pathway carbohydrate metabolism; pentose and glucuronate interconversion. In Streptococcus agalactiae serotype III (strain NEM316), this protein is Uronate isomerase.